Reading from the N-terminus, the 365-residue chain is Elongation factor Tu (365 aa).

GTP is bound by residues 1–7 (HVDHGKT), 62–66 (DCPGH), and 117–120 (NKCD). The tr-type G domain occupies 1-185 (HVDHGKTTLT…ILDTYIPEPK (185 aa)). T7 provides a ligand contact to Mg(2+).

This sequence belongs to the TRAFAC class translation factor GTPase superfamily. Classic translation factor GTPase family. EF-Tu/EF-1A subfamily. As to quaternary structure, monomer.

Its subcellular location is the cytoplasm. The catalysed reaction is GTP + H2O = GDP + phosphate + H(+). Its function is as follows. GTP hydrolase that promotes the GTP-dependent binding of aminoacyl-tRNA to the A-site of ribosomes during protein biosynthesis. This is Elongation factor Tu from Buchnera aphidicola subsp. Melaphis rhois.